Here is a 281-residue protein sequence, read N- to C-terminus: NAD-dependent protein deacetylase 1 (281 aa).

The 281-residue stretch at M1–L281 folds into the Deacetylase sirtuin-type domain. Residues G24–N44 and Q102–D105 each bind NAD(+). H120 acts as the Proton acceptor in catalysis. Zn(2+) contacts are provided by C128, C131, C183, and C186. NAD(+) contacts are provided by residues G224–S226, N250–G252, and V268.

Belongs to the sirtuin family. Class II subfamily. The cofactor is Zn(2+).

It is found in the cytoplasm. The enzyme catalyses N(6)-acetyl-L-lysyl-[protein] + NAD(+) + H2O = 2''-O-acetyl-ADP-D-ribose + nicotinamide + L-lysyl-[protein]. Its function is as follows. NAD-dependent protein deacetylase which modulates the activities of several enzymes which are inactive in their acetylated form. This chain is NAD-dependent protein deacetylase 1, found in Corynebacterium efficiens (strain DSM 44549 / YS-314 / AJ 12310 / JCM 11189 / NBRC 100395).